The primary structure comprises 487 residues: Inosine-5'-monophosphate dehydrogenase (487 aa).

CBS domains are found at residues 93 to 152 (VVTE…VTAV) and 153 to 214 (MTPK…CKDE). NAD(+) is bound by residues Asp-248, 248–250 (DSS), and 298–300 (GIG). Positions 300 and 302 each coordinate K(+). Ser-303 contacts IMP. Cys-305 is a K(+) binding site. The active-site Thioimidate intermediate is the Cys-305. Residues 338–340 (DGG), 361–362 (GS), and 385–389 (YRGMG) contribute to the IMP site. Arg-401 serves as the catalytic Proton acceptor. An IMP-binding site is contributed by Glu-415. K(+) is bound by residues Glu-469, Ser-470, and His-471.

Belongs to the IMPDH/GMPR family. In terms of assembly, homotetramer. It depends on K(+) as a cofactor.

The catalysed reaction is IMP + NAD(+) + H2O = XMP + NADH + H(+). It participates in purine metabolism; XMP biosynthesis via de novo pathway; XMP from IMP: step 1/1. Mycophenolic acid (MPA) is a non-competitive inhibitor that prevents formation of the closed enzyme conformation by binding to the same site as the amobile flap. In contrast, mizoribine monophosphate (MZP) is a competitive inhibitor that induces the closed conformation. MPA is a potent inhibitor of mammalian IMPDHs but a poor inhibitor of the bacterial enzymes. MZP is a more potent inhibitor of bacterial IMPDH. Catalyzes the conversion of inosine 5'-phosphate (IMP) to xanthosine 5'-phosphate (XMP), the first committed and rate-limiting step in the de novo synthesis of guanine nucleotides, and therefore plays an important role in the regulation of cell growth. The polypeptide is Inosine-5'-monophosphate dehydrogenase (Yersinia pestis).